The following is a 42-amino-acid chain: Photosystem II reaction center protein J (42 aa).

The helical transmembrane segment at 10–30 (IPLWLVGTVVGTLALGLVALF) threads the bilayer.

Belongs to the PsbJ family. As to quaternary structure, PSII is composed of 1 copy each of membrane proteins PsbA, PsbB, PsbC, PsbD, PsbE, PsbF, PsbH, PsbI, PsbJ, PsbK, PsbL, PsbM, PsbT, PsbX, PsbY, PsbZ, Psb30/Ycf12, at least 3 peripheral proteins of the oxygen-evolving complex and a large number of cofactors. It forms dimeric complexes.

The protein localises to the plastid. It is found in the chloroplast thylakoid membrane. In terms of biological role, one of the components of the core complex of photosystem II (PSII). PSII is a light-driven water:plastoquinone oxidoreductase that uses light energy to abstract electrons from H(2)O, generating O(2) and a proton gradient subsequently used for ATP formation. It consists of a core antenna complex that captures photons, and an electron transfer chain that converts photonic excitation into a charge separation. The polypeptide is Photosystem II reaction center protein J (Oltmannsiellopsis viridis (Marine flagellate)).